The chain runs to 523 residues: uncharacterized protein (523 aa).

One can recognise a Radical SAM core domain in the interval 193–447 (RKCSGCGNCR…ALKRRMIGKR (255 aa)). [4Fe-4S] cluster contacts are provided by C212, C220, and C223.

[4Fe-4S] cluster is required as a cofactor.

This is an uncharacterized protein from Methanopyrus kandleri (strain AV19 / DSM 6324 / JCM 9639 / NBRC 100938).